The chain runs to 421 residues: UDP-N-acetylglucosamine 1-carboxyvinyltransferase (421 aa).

22–23 (KN) lines the phosphoenolpyruvate pocket. Residue Arg-91 coordinates UDP-N-acetyl-alpha-D-glucosamine. The Proton donor role is filled by Cys-115. The residue at position 115 (Cys-115) is a 2-(S-cysteinyl)pyruvic acid O-phosphothioketal. UDP-N-acetyl-alpha-D-glucosamine contacts are provided by residues 120 to 124 (RPVDL), 160 to 163 (KVSV), Asp-305, and Ile-327.

This sequence belongs to the EPSP synthase family. MurA subfamily.

Its subcellular location is the cytoplasm. The catalysed reaction is phosphoenolpyruvate + UDP-N-acetyl-alpha-D-glucosamine = UDP-N-acetyl-3-O-(1-carboxyvinyl)-alpha-D-glucosamine + phosphate. The protein operates within cell wall biogenesis; peptidoglycan biosynthesis. Its function is as follows. Cell wall formation. Adds enolpyruvyl to UDP-N-acetylglucosamine. The protein is UDP-N-acetylglucosamine 1-carboxyvinyltransferase of Photorhabdus laumondii subsp. laumondii (strain DSM 15139 / CIP 105565 / TT01) (Photorhabdus luminescens subsp. laumondii).